Here is a 128-residue protein sequence, read N- to C-terminus: MSAATDQILDQLKSLSLLEAAELVKQIEEAFGVSAAAPVGVAVAAPAAAAAAEPVEEQTEFDVILESVPADKKIAVLKIVREITGLGLKEAKDLVEAAPKAVKEAIAKDAAEDAKKRIEEAGGKVTIK.

It belongs to the bacterial ribosomal protein bL12 family. As to quaternary structure, homodimer. Part of the ribosomal stalk of the 50S ribosomal subunit. Forms a multimeric L10(L12)X complex, where L10 forms an elongated spine to which 2 to 4 L12 dimers bind in a sequential fashion. Binds GTP-bound translation factors.

In terms of biological role, forms part of the ribosomal stalk which helps the ribosome interact with GTP-bound translation factors. Is thus essential for accurate translation. The polypeptide is Large ribosomal subunit protein bL12 (Trichormus variabilis (strain ATCC 29413 / PCC 7937) (Anabaena variabilis)).